We begin with the raw amino-acid sequence, 209 residues long: Uracil phosphoribosyltransferase (209 aa).

5-phospho-alpha-D-ribose 1-diphosphate-binding positions include Arg-79, Arg-104, and 131–139 (DPMLATGGS). Residues Ile-194 and 199–201 (GDA) contribute to the uracil site. Asp-200 serves as a coordination point for 5-phospho-alpha-D-ribose 1-diphosphate.

Belongs to the UPRTase family. Requires Mg(2+) as cofactor.

It catalyses the reaction UMP + diphosphate = 5-phospho-alpha-D-ribose 1-diphosphate + uracil. It participates in pyrimidine metabolism; UMP biosynthesis via salvage pathway; UMP from uracil: step 1/1. Its activity is regulated as follows. Allosterically activated by GTP. In terms of biological role, catalyzes the conversion of uracil and 5-phospho-alpha-D-ribose 1-diphosphate (PRPP) to UMP and diphosphate. In Levilactobacillus brevis (strain ATCC 367 / BCRC 12310 / CIP 105137 / JCM 1170 / LMG 11437 / NCIMB 947 / NCTC 947) (Lactobacillus brevis), this protein is Uracil phosphoribosyltransferase.